The chain runs to 363 residues: Protein EXORDIUM-like 5 (363 aa).

Residues 1–25 (MSSPATTITFFFFFTLSSFFYITSS) form the signal peptide. An N-linked (GlcNAc...) asparagine glycan is attached at N144.

Belongs to the EXORDIUM family.

Its subcellular location is the secreted. It is found in the extracellular space. It localises to the apoplast. May play a role in a brassinosteroid-dependent regulation of growth and development. This chain is Protein EXORDIUM-like 5 (EXL5), found in Arabidopsis thaliana (Mouse-ear cress).